We begin with the raw amino-acid sequence, 98 residues long: uncharacterized protein (98 aa).

The MOSC domain occupies 30–98 (KKVVPSVKIH…RRKFCRVRLE (69 aa)).

This is an uncharacterized protein from Haemophilus influenzae (strain ATCC 51907 / DSM 11121 / KW20 / Rd).